The sequence spans 548 residues: Cilia- and flagella-associated protein 97 (548 aa).

Residues Ser8 and Ser19 each carry the phosphoserine modification. Disordered regions lie at residues 85-297, 407-431, and 497-548; these read NYLT…RQEN, LSRQAEKPGNKSTIPGRSLGHPPKL, and YSPL…LRSH. Positions 91–107 are enriched in basic and acidic residues; that stretch reads GNERKPKFPSKEQHVEN. The span at 112 to 121 shows a compositional bias: low complexity; sequence TRSPSLLTSS. The span at 152–161 shows a compositional bias: acidic residues; sequence DYYTDGEESS. A Phosphothreonine modification is found at Thr155. A phosphoserine mark is found at Ser160 and Ser161. The span at 191 to 209 shows a compositional bias: low complexity; that stretch reads KASSSSLSSSSSRSSSDCS. The span at 214–237 shows a compositional bias: polar residues; the sequence is DMQNKPDSGSSGKRVSSVTPSSPK. The residue at position 235 (Ser235) is a Phosphoserine. Positions 238-248 are enriched in basic residues; the sequence is QKCKSGRKSSA. At Ser259 the chain carries Phosphoserine. Polar residues predominate over residues 264-289; that stretch reads TDVTPASTPDSSPAQPFELSQSQNQK. The stretch at 383 to 460 forms a coiled coil; it reads RKNYSFTREE…ALLKRLEAVK (78 aa). Polar residues-rich tracts occupy residues 504 to 514 and 537 to 548; these read SRTSSATSGLS and IQCSNSKVLRSH.

It belongs to the CFAP97 family.

The polypeptide is Cilia- and flagella-associated protein 97 (Rattus norvegicus (Rat)).